We begin with the raw amino-acid sequence, 99 residues long: DNA-directed RNA polymerase subunit Rpo11 (99 aa).

It belongs to the archaeal Rpo11/eukaryotic RPB11/RPC19 RNA polymerase subunit family. Part of the RNA polymerase complex.

It is found in the cytoplasm. The enzyme catalyses RNA(n) + a ribonucleoside 5'-triphosphate = RNA(n+1) + diphosphate. Functionally, DNA-dependent RNA polymerase (RNAP) catalyzes the transcription of DNA into RNA using the four ribonucleoside triphosphates as substrates. The chain is DNA-directed RNA polymerase subunit Rpo11 from Aeropyrum pernix (strain ATCC 700893 / DSM 11879 / JCM 9820 / NBRC 100138 / K1).